A 62-amino-acid chain; its full sequence is Small ribosomal subunit protein eS27 (62 aa).

C17, C20, C36, and C39 together coordinate Zn(2+). Residues 17 to 39 form a C4-type zinc finger; it reads CNDCENEQIIFGSASRKITCVVC.

Belongs to the eukaryotic ribosomal protein eS27 family. In terms of assembly, part of the 30S ribosomal subunit. Zn(2+) serves as cofactor.

The chain is Small ribosomal subunit protein eS27 from Methanosarcina barkeri (strain Fusaro / DSM 804).